The following is a 209-amino-acid chain: Thymidine kinase (209 aa).

Residues 9 to 16 (AAMNAGKS) and 88 to 91 (DEAQ) each bind ATP. The Proton acceptor role is filled by Glu-89. Zn(2+) contacts are provided by Cys-146, Cys-148, Cys-183, and His-186.

It belongs to the thymidine kinase family. In terms of assembly, homotetramer.

It is found in the cytoplasm. It carries out the reaction thymidine + ATP = dTMP + ADP + H(+). The chain is Thymidine kinase from Legionella pneumophila (strain Lens).